A 291-amino-acid polypeptide reads, in one-letter code: Prepilin leader peptidase/N-methyltransferase (291 aa).

A helical transmembrane segment spans residues 14 to 34 (LYFSLVFLFSLMIGSFLNVVI). 4 residues coordinate Zn(2+): cysteine 75, cysteine 78, cysteine 100, and cysteine 103. The next 6 helical transmembrane spans lie at 107–127 (ISAR…VVAM), 131–151 (PGWG…LTFI), 162–182 (LTLP…YVPL), 186–206 (VIGA…FKLL), 232–252 (LPIV…GLIL), and 262–282 (IPFG…GDSI).

This sequence belongs to the peptidase A24 family. Zn(2+) serves as cofactor.

It is found in the cell inner membrane. The catalysed reaction is Typically cleaves a -Gly-|-Phe- bond to release an N-terminal, basic peptide of 5-8 residues from type IV prepilin, and then N-methylates the new N-terminal amino group, the methyl donor being S-adenosyl-L-methionine.. Its function is as follows. Plays an essential role in type IV pili and type II pseudopili formation by proteolytically removing the leader sequence from substrate proteins and subsequently monomethylating the alpha-amino group of the newly exposed N-terminal phenylalanine. In Aeromonas salmonicida (strain A449), this protein is Prepilin leader peptidase/N-methyltransferase (tapD).